Consider the following 237-residue polypeptide: Sugar fermentation stimulation protein homolog (237 aa).

It belongs to the SfsA family.

The chain is Sugar fermentation stimulation protein homolog from Colwellia psychrerythraea (strain 34H / ATCC BAA-681) (Vibrio psychroerythus).